Consider the following 141-residue polypeptide: Endoribonuclease YbeY (141 aa).

H105, H109, and D115 together coordinate Zn(2+).

This sequence belongs to the endoribonuclease YbeY family. It depends on Zn(2+) as a cofactor.

It is found in the cytoplasm. Single strand-specific metallo-endoribonuclease involved in late-stage 70S ribosome quality control and in maturation of the 3' terminus of the 16S rRNA. This chain is Endoribonuclease YbeY, found in Chlorobaculum parvum (strain DSM 263 / NCIMB 8327) (Chlorobium vibrioforme subsp. thiosulfatophilum).